A 602-amino-acid chain; its full sequence is mRNA-decapping enzyme 1A (602 aa).

Phosphoserine is present on S82. Residues 152–161 are compositionally biased toward basic and acidic residues; that stretch reads RSQQAARDKQ. Disordered regions lie at residues 152 to 174, 191 to 234, and 267 to 291; these read RSQQ…DQRP, NQMG…PSGH, and GDAS…APQS. S162, S199, and S200 each carry phosphoserine. A compositionally biased stretch (polar residues) spans 193–229; that stretch reads MGGSNISSPGLQPSTQLSNLGSTETLEETPSGSQDKS. Residues S335 and S339 each carry the phosphoserine modification. T367 carries the phosphothreonine modification. A Phosphoserine modification is found at S372. An Asymmetric dimethylarginine modification is found at R395. T420 is modified (phosphothreonine). 4 positions are modified to phosphoserine: S441, S542, S543, and S545. A phosphothreonine mark is found at T548 and T551.

It belongs to the DCP1 family. Forms a complex with EDC3, DCP2, DDX6 and EDC4/HEDLS, within this complex directly interacts with EDC3. Part of a cytoplasmic complex containing proteins involved in mRNA decay, including XRN1 and LSM1. Interacts with DCP1B. Interacts with DCP2. Interacts with DDX17 in an RNA-independent manner. Interacts with PNRC2. Interacts with SMAD4. Interacts with UPF1. Interacts with ZC3HAV1. Interacts with ZFP36L1. Interacts with NBDY. Interacts with DHX34; the interaction is RNA-independent. As to expression, ubiquitous, with highest expression in the spleen and testis (at protein level).

The protein localises to the cytoplasm. It localises to the P-body. It is found in the nucleus. The catalysed reaction is a 5'-end (N(7)-methyl 5'-triphosphoguanosine)-ribonucleoside in mRNA + H2O = N(7)-methyl-GDP + a 5'-end phospho-ribonucleoside in mRNA + 2 H(+). Functionally, necessary for the degradation of mRNAs, both in normal mRNA turnover and in nonsense-mediated mRNA decay. Removes the 7-methyl guanine cap structure from mRNA molecules, yielding a 5'-phosphorylated mRNA fragment and 7m-GDP. Contributes to the transactivation of target genes after stimulation by TGFB1. Essential for embryonic development. In Mus musculus (Mouse), this protein is mRNA-decapping enzyme 1A (Dcp1a).